A 358-amino-acid chain; its full sequence is Probable D-xylulose reductase A (358 aa).

3 residues coordinate Zn(2+): C47, H72, and E73. NAD(+) is bound at residue 182-187; that stretch reads GAGPVG.

This sequence belongs to the zinc-containing alcohol dehydrogenase family. Zn(2+) serves as cofactor.

It carries out the reaction xylitol + NAD(+) = D-xylulose + NADH + H(+). The protein operates within carbohydrate degradation; L-arabinose degradation via L-arabinitol; D-xylulose 5-phosphate from L-arabinose (fungal route): step 4/5. In terms of biological role, xylitol dehydrogenase which catalyzes the conversion of xylitol to D-xylulose. Xylose is a major component of hemicelluloses such as xylan. Most fungi utilize D-xylose via three enzymatic reactions, xylose reductase (XR), xylitol dehydrogenase (XDH), and xylulokinase, to form xylulose 5-phosphate, which enters pentose phosphate pathway. The sequence is that of Probable D-xylulose reductase A (xdhA) from Aspergillus niger (strain ATCC MYA-4892 / CBS 513.88 / FGSC A1513).